We begin with the raw amino-acid sequence, 338 residues long: Dehydrogenase/reductase SDR family member 7 (338 aa).

The first 28 residues, M1–A28, serve as a signal peptide directing secretion. NAD(+) contacts are provided by S60 and I62. Residue S190 coordinates substrate. NAD(+) contacts are provided by Y203, K207, and S239. The Proton acceptor role is filled by Y203.

It belongs to the short-chain dehydrogenases/reductases (SDR) family.

It is found in the endoplasmic reticulum membrane. The enzyme catalyses all-trans-retinol + NADP(+) = all-trans-retinal + NADPH + H(+). The catalysed reaction is 5alpha-androstane-3alpha,17beta-diol + NADP(+) = 17beta-hydroxy-5alpha-androstan-3-one + NADPH + H(+). Its function is as follows. NADPH-dependent oxidoreductase which catalyzes the reduction of a variety of compounds bearing carbonyl groups including steroids, retinoids and xenobiotics. Catalyzes the reduction/inactivation of 5alpha-dihydrotestosterone to 3alpha-androstanediol, with a possible role in the modulation of androgen receptor function. Involved in the reduction of all-trans-retinal to all-trans-retinol. Converts cortisone to 20beta-dihydrocortisone in vitro, although the physiological relevance of this activity is questionable. Reduces exogenous compounds such as quinones (1,2-naphtoquinone, 9,10-phenantrenequinone and benzoquinone) and other xenobiotics (alpha-diketones) in vitro, suggesting a role in the biotransformation of xenobiotics with carbonyl group. A dehydrogenase activity has not been detected so far. May play a role as tumor suppressor. The protein is Dehydrogenase/reductase SDR family member 7 of Mus musculus (Mouse).